A 338-amino-acid polypeptide reads, in one-letter code: Tryptophan--tRNA ligase (338 aa).

ATP contacts are provided by residues 11-13 and 19-20; these read QPS and GN. The 'HIGH' region motif lies at 12 to 20; it reads PSGELSIGN. Asp-135 contributes to the L-tryptophan binding site. Residues 147–149, Val-189, and 198–202 contribute to the ATP site; these read GSD and KMSKS. A 'KMSKS' region motif is present at residues 198–202; it reads KMSKS.

It belongs to the class-I aminoacyl-tRNA synthetase family. Homodimer.

The protein resides in the cytoplasm. It catalyses the reaction tRNA(Trp) + L-tryptophan + ATP = L-tryptophyl-tRNA(Trp) + AMP + diphosphate + H(+). Its function is as follows. Catalyzes the attachment of tryptophan to tRNA(Trp). The sequence is that of Tryptophan--tRNA ligase from Vibrio vulnificus (strain YJ016).